Consider the following 703-residue polypeptide: Ubiquitin-like modifier-activating enzyme ATG7 (703 aa).

The residue at position 2 (Ala2) is an N-acetylalanine. Positions 15–17 (FAP) match the FAP motif motif. Lys45 is covalently cross-linked (Glycyl lysine isopeptide (Lys-Gly) (interchain with G-Cter in ubiquitin)). Cys572 acts as the Glycyl thioester intermediate in catalysis. A Phosphoserine modification is found at Ser698.

It belongs to the ATG7 family. As to quaternary structure, homodimer. Interacts with ATG3; this interaction is essential for the transfer of ATG8-like proteins's thioester from ATG7 to ATG3 and plays a role in the conjugation of ATG12 to ATG5. Interacts with ATG12. Forms intermediate conjugates with GABARAPL1. Forms intermediate conjugates with ATG8-like proteins such as GABARAP, GABARAPL2 or MAP1LC3A. Interacts with EP300 acetyltransferase. Interacts with FOXO1. Post-translationally, acetylated by EP300. In terms of processing, polyubiquitinated on Lys-45 via 'Lys-63'-linked ubiquitin by TRIM32; this modification positiely regulates ATG8 and ATG12 activating enzyme activity leading to initiation of autophagy under metabolic stress. Widely expressed, especially in kidney, liver, lymph nodes and bone marrow.

It localises to the cytoplasm. The protein resides in the preautophagosomal structure. In terms of biological role, E1-like activating enzyme involved in the 2 ubiquitin-like systems required for cytoplasm to vacuole transport (Cvt) and autophagy. Activates ATG12 for its conjugation with ATG5 as well as the ATG8 family proteins for their conjugation with phosphatidylethanolamine. Both systems are needed for the ATG8 association to Cvt vesicles and autophagosomes membranes. Required for autophagic death induced by caspase-8 inhibition. Facilitates LC3-I lipidation with phosphatidylethanolamine to form LC3-II which is found on autophagosomal membranes. Required for mitophagy which contributes to regulate mitochondrial quantity and quality by eliminating the mitochondria to a basal level to fulfill cellular energy requirements and preventing excess ROS production. Modulates p53/TP53 activity to regulate cell cycle and survival during metabolic stress. Also plays a key role in the maintenance of axonal homeostasis, the prevention of axonal degeneration, the maintenance of hematopoietic stem cells, the formation of Paneth cell granules, as well as in adipose differentiation. Plays a role in regulating the liver clock and glucose metabolism by mediating the autophagic degradation of CRY1 (clock repressor) in a time-dependent manner. The chain is Ubiquitin-like modifier-activating enzyme ATG7 from Homo sapiens (Human).